Here is a 415-residue protein sequence, read N- to C-terminus: tRNA(Ile2) 2-agmatinylcytidine synthetase TiaS (415 aa).

The protein belongs to the TiaS family.

The protein resides in the cytoplasm. The enzyme catalyses cytidine(34) in tRNA(Ile2) + agmatine + ATP + H2O = 2-agmatinylcytidine(34) in tRNA(Ile2) + AMP + 2 phosphate + 2 H(+). In terms of biological role, ATP-dependent agmatine transferase that catalyzes the formation of 2-agmatinylcytidine (agm2C) at the wobble position (C34) of tRNA(Ile2), converting the codon specificity from AUG to AUA. In Methanocorpusculum labreanum (strain ATCC 43576 / DSM 4855 / Z), this protein is tRNA(Ile2) 2-agmatinylcytidine synthetase TiaS.